The chain runs to 1200 residues: Metabotropic glycine receptor (1200 aa).

The N-terminal stretch at 1-24 is a signal peptide; that stretch reads MGAMAYSLLFCLLLAHLGLGEVGA. The segment at 25–62 is disordered; the sequence is SLDPPGRPDSPRERTPRGKQHGQQLPRASAPDPSIPWS. The Extracellular segment spans residues 25–417; sequence SLDPPGRPDS…CFVQEDKYLR (393 aa). The segment at 85–281 is cache-like region; it reads YLYTGDFHQL…CENGSYKPGW (197 aa). N-linked (GlcNAc...) asparagine glycans are attached at residues N98 and N143. C99 and C272 are oxidised to a cystine. Glycine contacts are provided by S172 and R173. N215 carries N-linked (GlcNAc...) asparagine glycosylation. Positions 234 to 253 are disordered; sequence LHRRGSNQGPRGLGHSWRRR. E271 contributes to the glycine binding site. A glycan (N-linked (GlcNAc...) asparagine) is linked at N274. A glycine-binding site is contributed by D307. N-linked (GlcNAc...) asparagine glycosylation is present at N333. The helical transmembrane segment at 418 to 439 threads the bilayer; it reads LAIISFQALCMLLDFVSMLVVY. Topologically, residues 440–451 are cytoplasmic; the sequence is HFRKAKSIRASG. The helical transmembrane segment at 452–474 threads the bilayer; sequence LILLETILFGSLLLYFPVVILYF. Topologically, residues 475-478 are extracellular; it reads EPST. A helical transmembrane segment spans residues 479 to 501; sequence FRCILLRWARLLGFATVYGTVTL. C481 and C573 are oxidised to a cystine. Residues 502 to 525 lie on the Cytoplasmic side of the membrane; the sequence is KLHRVLKVFLSRTAQRIPYMTGGR. Residues 526–547 traverse the membrane as a helical segment; sequence VMRMLAVIVLVVFWFLVGWTSS. Residues 548 to 576 are Extracellular-facing; that stretch reads MCQNLERDILLVGQGQTSDHLTFNMCLID. The helical transmembrane segment at 577-597 threads the bilayer; it reads RWDYMTAVAEFLFLLWGIYLC. The Cytoplasmic segment spans residues 598-611; it reads YAVRTVPSAFHEPR. Residues 612 to 633 traverse the membrane as a helical segment; the sequence is YMAVAVHNELIITAIFHTIRFV. Residues 634-642 are Extracellular-facing; that stretch reads LASRLQPDW. A helical membrane pass occupies residues 643–664; sequence MLMLYFAHAHLTVTVTIGLLLI. The Cytoplasmic segment spans residues 665-1200; sequence PKFSHSSNNP…SANKIPGPQK (536 aa). A phosphoserine mark is found at S694, S705, and S708. Positions 757–875 are disordered; sequence RITEIPETVS…EAESTESVPL (119 aa). Composition is skewed to basic and acidic residues over residues 769-781 and 819-828; these read CSKE…DHSA and STYDHVRDQT. Residue K774 forms a Glycyl lysine isopeptide (Lys-Gly) (interchain with G-Cter in ubiquitin) linkage. Low complexity predominate over residues 845 to 856; sequence ENSTLESLSSKK. S865 and S944 each carry phosphoserine. The segment at 947-988 is disordered; it reads DNVETIPNSGHMEEPRKPQKSGIMKQQRVSLPTANPDVSSGI. The segment covering 973–988 has biased composition (polar residues); sequence QRVSLPTANPDVSSGI. The VCPWE motif 1 signature appears at 1000–1004; sequence VCPWE. S1059 is subject to Phosphoserine. Positions 1065-1069 match the VCPWE motif 2 motif; that stretch reads VCPWE. Residue S1074 is modified to Phosphoserine. Positions 1130 to 1160 are disordered; sequence QMGDQEKQTSSSVDIIPGSCNSSNNSHQPLT. A VCPWE motif 3 motif is present at residues 1165-1169; that stretch reads VCPWE. Residues 1177-1200 form a disordered region; that stretch reads NAERSVTLPASSALSANKIPGPQK. The segment covering 1178–1191 has biased composition (polar residues); that stretch reads AERSVTLPASSALS.

This sequence belongs to the G-protein coupled receptor 3 family. Homodimer. Associates with the RGS7-GNB5 complex, promoting its localization to the cell membrane and regulating its GTPase activator activity. Interacts (via VCPWE motifs) with GNAO1. Interacts with GPC4. Interacts with EGFLAM. Highly expressed in brain. Expressed in several brain regions including the cerebral cortex, hippocampus, cerebellum and caudate putamen. Only expressed in neurons, and not in microglia, oligodendrocytes or astrocytes. Expressed in the visual center of the cerebral cortex. Also expressed in the eye, including photoreceptors, ganglion cells and trabecular meshwork.

The protein resides in the cell membrane. The protein localises to the postsynaptic cell membrane. It is found in the presynaptic cell membrane. It localises to the nucleus. Metabotropic receptor for glycine that controls synapse formation and function in the brain. Acts as an atypical G-protein coupled receptor that recruits and regulates the RGS7-GNB5 complex instead of activating G proteins. In absence of glycine ligand, promotes the GTPase activator activity of RGS7, increasing the GTPase activity of G protein alpha subunits, thereby driving them into their inactive GDP-bound form. Glycine-binding changes the conformation of the intracellular surface, inhibiting the GTPase activator activity of the RGS7-GNB5 complex, promoting G protein alpha subunits into their active GTP-bound form and regulating cAMP levels. Also able to bind taurine, a compound closely related to glycine, but with a two-fold lower affinity. Glycine receptor-dependent regulation of cAMP controls key ion channels, kinases and neurotrophic factors involved in neuronal excitability and synaptic transmission. Plays a pivotal role in regulating mood and cognition via its ability to regulate neuronal excitability in L2/L3 pyramidal neurons of the prefrontal cortex. Also involved in spatial learning by regulating hippocampal CA1 neuronal excitability. Acts as a synaptic organizer in the hippocampus, required for proper mossy fiber-CA3 neurocircuitry establishment, structure and function: induces presynaptic differentiation in contacting axons via its interaction with GPC4. In addition to glycine, may also act as a receptor for osteocalcin (Bglap or Bglap2) hormone: osteocalcin-binding initiates a signaling response that prevents neuronal apoptosis in the hippocampus and regulates the synthesis of neurotransmitters. The protein is Metabotropic glycine receptor of Mus musculus (Mouse).